Here is a 71-residue protein sequence, read N- to C-terminus: ATP synthase F(0) complex subunit e, mitochondrial (71 aa).

An N6-acetyllysine modification is found at Lys-34. Ser-68 is subject to Phosphoserine.

Belongs to the ATPase e subunit family. As to quaternary structure, component of the ATP synthase complex composed at least of ATP5F1A/subunit alpha, ATP5F1B/subunit beta, ATP5MC1/subunit c (homooctomer), MT-ATP6/subunit a, MT-ATP8/subunit 8, ATP5ME/subunit e, ATP5MF/subunit f, ATP5MG/subunit g, ATP5MK/subunit k, ATP5MJ/subunit j, ATP5F1C/subunit gamma, ATP5F1D/subunit delta, ATP5F1E/subunit epsilon, ATP5PF/subunit F6, ATP5PB/subunit b, ATP5PD/subunit d, ATP5PO/subunit OSCP. ATP synthase complex consists of a soluble F(1) head domain (subunits alpha(3) and beta(3)) - the catalytic core - and a membrane F(0) domain - the membrane proton channel (subunits c, a, 8, e, f, g, k and j). These two domains are linked by a central stalk (subunits gamma, delta, and epsilon) rotating inside the F1 region and a stationary peripheral stalk (subunits F6, b, d, and OSCP).

It is found in the mitochondrion. The protein localises to the mitochondrion inner membrane. Subunit e, of the mitochondrial membrane ATP synthase complex (F(1)F(0) ATP synthase or Complex V) that produces ATP from ADP in the presence of a proton gradient across the membrane which is generated by electron transport complexes of the respiratory chain. ATP synthase complex consist of a soluble F(1) head domain - the catalytic core - and a membrane F(1) domain - the membrane proton channel. These two domains are linked by a central stalk rotating inside the F(1) region and a stationary peripheral stalk. During catalysis, ATP synthesis in the catalytic domain of F(1) is coupled via a rotary mechanism of the central stalk subunits to proton translocation. In vivo, can only synthesize ATP although its ATP hydrolase activity can be activated artificially in vitro. Part of the complex F(0) domain. In Rattus norvegicus (Rat), this protein is ATP synthase F(0) complex subunit e, mitochondrial.